A 625-amino-acid chain; its full sequence is Arginine--tRNA ligase (625 aa).

The 'HIGH' region motif lies at 128 to 138; it reads VNPTKPLHMGH.

Belongs to the class-I aminoacyl-tRNA synthetase family.

It localises to the cytoplasm. The catalysed reaction is tRNA(Arg) + L-arginine + ATP = L-arginyl-tRNA(Arg) + AMP + diphosphate. In Pyrococcus abyssi (strain GE5 / Orsay), this protein is Arginine--tRNA ligase (argS).